Reading from the N-terminus, the 503-residue chain is Potassium voltage-gated channel subfamily V member 1 (503 aa).

The Cytoplasmic portion of the chain corresponds to 1 to 213; that stretch reads MELLPPRGRA…EKPGSCTAAR (213 aa). Residues 214–234 traverse the membrane as a helical segment; that stretch reads IFGVISIIFVAVSIVNMALMS. The Extracellular segment spans residues 235–246; it reads AELSWLDPQLLE. The helical transmembrane segment at 247-267 threads the bilayer; sequence ILEYVCISWFTGEFVLRFLCV. The Cytoplasmic segment spans residues 268 to 279; that stretch reads RDRCRFLRKVPN. The chain crosses the membrane as a helical span at residues 280–300; sequence IIDLLAILPFYITLLVESLSG. The Extracellular portion of the chain corresponds to 301-312; sequence SQTTQELENVGR. A helical; Voltage-sensor transmembrane segment spans residues 313–334; it reads IVQVLRLLRALRMLKLGRHSTG. Residues 335–348 are Cytoplasmic-facing; sequence LRSLGMTITQCYEE. A helical transmembrane segment spans residues 349 to 369; that stretch reads VGLLLLFLSVGISIFSTVEYF. Residues 395–400 carry the Selectivity filter motif; sequence TVGYGD. The helical transmembrane segment at 410–430 threads the bilayer; it reads IVAFMCILSGILVLALPIAII. Topologically, residues 431-503 are cytoplasmic; that stretch reads NDRFSACYFT…RSSGGDDFWF (73 aa).

The protein belongs to the potassium channel family. V (TC 1.A.1.2) subfamily. Kv8.1/KCNV1 sub-subfamily. As to quaternary structure, heteromultimer with KCNB1 and KCNB2. Interacts with KCNC4 and KCND1.

It is found in the cell membrane. Functionally, potassium channel subunit that does not form functional channels by itself. Modulates KCNB1 and KCNB2 channel activity by shifting the threshold for inactivation to more negative values and by slowing the rate of inactivation. Can down-regulate the channel activity of KCNB1, KCNB2, KCNC4 and KCND1, possibly by trapping them in intracellular membranes. This Bos taurus (Bovine) protein is Potassium voltage-gated channel subfamily V member 1 (KCNV1).